A 357-amino-acid polypeptide reads, in one-letter code: UDP-N-acetylglucosamine--N-acetylmuramyl-(pentapeptide) pyrophosphoryl-undecaprenol N-acetylglucosamine transferase (357 aa).

Residues 14–16 (TGG), Asn-120, Arg-164, Ser-194, and Gln-291 contribute to the UDP-N-acetyl-alpha-D-glucosamine site.

This sequence belongs to the glycosyltransferase 28 family. MurG subfamily.

It localises to the cell inner membrane. It carries out the reaction di-trans,octa-cis-undecaprenyl diphospho-N-acetyl-alpha-D-muramoyl-L-alanyl-D-glutamyl-meso-2,6-diaminopimeloyl-D-alanyl-D-alanine + UDP-N-acetyl-alpha-D-glucosamine = di-trans,octa-cis-undecaprenyl diphospho-[N-acetyl-alpha-D-glucosaminyl-(1-&gt;4)]-N-acetyl-alpha-D-muramoyl-L-alanyl-D-glutamyl-meso-2,6-diaminopimeloyl-D-alanyl-D-alanine + UDP + H(+). It functions in the pathway cell wall biogenesis; peptidoglycan biosynthesis. Its function is as follows. Cell wall formation. Catalyzes the transfer of a GlcNAc subunit on undecaprenyl-pyrophosphoryl-MurNAc-pentapeptide (lipid intermediate I) to form undecaprenyl-pyrophosphoryl-MurNAc-(pentapeptide)GlcNAc (lipid intermediate II). The protein is UDP-N-acetylglucosamine--N-acetylmuramyl-(pentapeptide) pyrophosphoryl-undecaprenol N-acetylglucosamine transferase of Fusobacterium nucleatum subsp. nucleatum (strain ATCC 25586 / DSM 15643 / BCRC 10681 / CIP 101130 / JCM 8532 / KCTC 2640 / LMG 13131 / VPI 4355).